The following is a 291-amino-acid chain: Acetyl-coenzyme A carboxylase carboxyl transferase subunit beta (291 aa).

A CoA carboxyltransferase N-terminal domain is found at 34 to 291; sequence MWTKCSNCNS…LILHGVNKYE (258 aa). Cys-38, Cys-41, Cys-57, and Cys-60 together coordinate Zn(2+). The segment at 38–60 adopts a C4-type zinc-finger fold; that stretch reads CSNCNSMIYYEDLENNKYVCTKC.

This sequence belongs to the AccD/PCCB family. In terms of assembly, acetyl-CoA carboxylase is a heterohexamer composed of biotin carboxyl carrier protein (AccB), biotin carboxylase (AccC) and two subunits each of ACCase subunit alpha (AccA) and ACCase subunit beta (AccD). It depends on Zn(2+) as a cofactor.

The protein localises to the cytoplasm. The catalysed reaction is N(6)-carboxybiotinyl-L-lysyl-[protein] + acetyl-CoA = N(6)-biotinyl-L-lysyl-[protein] + malonyl-CoA. Its pathway is lipid metabolism; malonyl-CoA biosynthesis; malonyl-CoA from acetyl-CoA: step 1/1. Functionally, component of the acetyl coenzyme A carboxylase (ACC) complex. Biotin carboxylase (BC) catalyzes the carboxylation of biotin on its carrier protein (BCCP) and then the CO(2) group is transferred by the transcarboxylase to acetyl-CoA to form malonyl-CoA. The chain is Acetyl-coenzyme A carboxylase carboxyl transferase subunit beta from Clostridium botulinum (strain Alaska E43 / Type E3).